The primary structure comprises 111 residues: Ribonuclease P protein component (111 aa).

The protein belongs to the RnpA family. Consists of a catalytic RNA component (M1 or rnpB) and a protein subunit.

The enzyme catalyses Endonucleolytic cleavage of RNA, removing 5'-extranucleotides from tRNA precursor.. Functionally, RNaseP catalyzes the removal of the 5'-leader sequence from pre-tRNA to produce the mature 5'-terminus. It can also cleave other RNA substrates such as 4.5S RNA. The protein component plays an auxiliary but essential role in vivo by binding to the 5'-leader sequence and broadening the substrate specificity of the ribozyme. The polypeptide is Ribonuclease P protein component (Clostridium botulinum (strain Okra / Type B1)).